A 465-amino-acid chain; its full sequence is Casein kinase 1-like protein 2 (465 aa).

In terms of domain architecture, Protein kinase spans 9-277; it reads FRLGRKIGGG…LKRLFRDLFI (269 aa). ATP contacts are provided by residues 15 to 23 and Lys38; that span reads IGGGSFGEI. Residue Asp128 is the Proton acceptor of the active site. Disordered stretches follow at residues 300 to 344 and 396 to 428; these read STPP…GIPR and REAAVLGTDSEPSNPQIVEAGSGSNSKIPVSRN. Positions 405–428 are enriched in polar residues; it reads SEPSNPQIVEAGSGSNSKIPVSRN.

It belongs to the protein kinase superfamily. CK1 Ser/Thr protein kinase family. Casein kinase I subfamily. As to quaternary structure, monomer. Post-translationally, autophosphorylated.

It is found in the cytoplasm. The protein resides in the nucleus. The catalysed reaction is L-seryl-[protein] + ATP = O-phospho-L-seryl-[protein] + ADP + H(+). It carries out the reaction L-threonyl-[protein] + ATP = O-phospho-L-threonyl-[protein] + ADP + H(+). Its function is as follows. Casein kinases are operationally defined by their preferential utilization of acidic proteins such as caseins as substrates. It can phosphorylate a large number of proteins. The protein is Casein kinase 1-like protein 2 of Arabidopsis thaliana (Mouse-ear cress).